The primary structure comprises 402 residues: Speedy protein E21 (402 aa).

Residues 1–90 (MDRTETRFRK…EPEKELAPEP (90 aa)) are disordered. A compositionally biased stretch (polar residues) spans 16 to 39 (GKITTSRQLHPQNEQSPQRSTSGY). A compositionally biased stretch (acidic residues) spans 76-90 (DESEEEPEKELAPEP).

Belongs to the Speedy/Ringo family.

The polypeptide is Speedy protein E21 (Homo sapiens (Human)).